A 343-amino-acid polypeptide reads, in one-letter code: N-acetyl-gamma-glutamyl-phosphate reductase (343 aa).

Cysteine 146 is a catalytic residue.

It belongs to the NAGSA dehydrogenase family. Type 1 subfamily.

It localises to the cytoplasm. It catalyses the reaction N-acetyl-L-glutamate 5-semialdehyde + phosphate + NADP(+) = N-acetyl-L-glutamyl 5-phosphate + NADPH + H(+). It participates in amino-acid biosynthesis; L-arginine biosynthesis; N(2)-acetyl-L-ornithine from L-glutamate: step 3/4. In terms of biological role, catalyzes the NADPH-dependent reduction of N-acetyl-5-glutamyl phosphate to yield N-acetyl-L-glutamate 5-semialdehyde. This Arthrobacter sp. (strain FB24) protein is N-acetyl-gamma-glutamyl-phosphate reductase.